We begin with the raw amino-acid sequence, 241 residues long: Caffeoyl-CoA O-methyltransferase (241 aa).

Position 1 is a blocked amino end (Met) (methionine 1). Position 15 (lysine 15) interacts with substrate. Residues threonine 57, glutamate 79, glycine 81–valine 82, serine 87, aspartate 105, and alanine 134 each bind S-adenosyl-L-methionine. Position 157 (aspartate 157) interacts with substrate. Aspartate 157 is a binding site for a divalent metal cation. Aspartate 159 is a binding site for S-adenosyl-L-methionine. 2 residues coordinate a divalent metal cation: aspartate 183 and asparagine 184. Asparagine 188 serves as a coordination point for substrate.

This sequence belongs to the class I-like SAM-binding methyltransferase superfamily. Cation-dependent O-methyltransferase family. CCoAMT subfamily. Homodimer. It depends on a divalent metal cation as a cofactor. As to expression, roots and leaves.

The enzyme catalyses (E)-caffeoyl-CoA + S-adenosyl-L-methionine = (E)-feruloyl-CoA + S-adenosyl-L-homocysteine + H(+). Its pathway is aromatic compound metabolism; phenylpropanoid biosynthesis. Its function is as follows. Methylates caffeoyl-CoA to feruloyl-CoA and 5-hydroxyferuloyl-CoA to sinapoyl-CoA. Plays a role in the synthesis of feruloylated polysaccharides. Involved in the reinforcement of the plant cell wall. Also involved in the responding to wounding or pathogen challenge by the increased formation of cell wall-bound ferulic acid polymers. This Petroselinum crispum (Parsley) protein is Caffeoyl-CoA O-methyltransferase.